We begin with the raw amino-acid sequence, 237 residues long: Ribonuclease PH (237 aa).

Phosphate-binding positions include arginine 86 and 124-126; that span reads GTR.

Belongs to the RNase PH family. In terms of assembly, homohexameric ring arranged as a trimer of dimers.

It carries out the reaction tRNA(n+1) + phosphate = tRNA(n) + a ribonucleoside 5'-diphosphate. Its function is as follows. Phosphorolytic 3'-5' exoribonuclease that plays an important role in tRNA 3'-end maturation. Removes nucleotide residues following the 3'-CCA terminus of tRNAs; can also add nucleotides to the ends of RNA molecules by using nucleoside diphosphates as substrates, but this may not be physiologically important. Probably plays a role in initiation of 16S rRNA degradation (leading to ribosome degradation) during starvation. The chain is Ribonuclease PH from Methylobacterium radiotolerans (strain ATCC 27329 / DSM 1819 / JCM 2831 / NBRC 15690 / NCIMB 10815 / 0-1).